The primary structure comprises 70 residues: Small ribosomal subunit protein bS21 (70 aa).

It belongs to the bacterial ribosomal protein bS21 family.

The chain is Small ribosomal subunit protein bS21 from Campylobacter hominis (strain ATCC BAA-381 / DSM 21671 / CCUG 45161 / LMG 19568 / NCTC 13146 / CH001A).